Reading from the N-terminus, the 445-residue chain is Phosphoglucosamine mutase (445 aa).

Serine 99 serves as the catalytic Phosphoserine intermediate. Mg(2+)-binding residues include serine 99, aspartate 242, aspartate 244, and aspartate 246. A Phosphoserine modification is found at serine 99.

The protein belongs to the phosphohexose mutase family. The cofactor is Mg(2+). In terms of processing, activated by phosphorylation.

It carries out the reaction alpha-D-glucosamine 1-phosphate = D-glucosamine 6-phosphate. In terms of biological role, catalyzes the conversion of glucosamine-6-phosphate to glucosamine-1-phosphate. This chain is Phosphoglucosamine mutase, found in Nitratiruptor sp. (strain SB155-2).